The chain runs to 402 residues: Multidrug resistance protein MdtH (402 aa).

11 helical membrane-spanning segments follow: residues 13–33 (YFLL…FPLI), 45–65 (ALMV…LGIF), 99–116 (PWLL…GTLF), 139–159 (LLMM…SWLL), 165–185 (LVCA…AWLL), 214–234 (VLTL…LPIM), 244–264 (AVKW…YPIA), 277–297 (LMAG…VGNL), 300–322 (LFTL…ETLS), 340–360 (LGLA…FDMG), and 368–388 (LPWM…GWQF).

It belongs to the major facilitator superfamily. DHA1 family. MdtH (TC 2.A.1.2.21) subfamily.

It localises to the cell inner membrane. In Citrobacter koseri (strain ATCC BAA-895 / CDC 4225-83 / SGSC4696), this protein is Multidrug resistance protein MdtH.